The primary structure comprises 431 residues: Female gametocyte surface protein P47 (431 aa).

The first 20 residues, 1–20 (MKGFTGASIIVFYLIKGYLS), serve as a signal peptide directing secretion. The 6-Cys 1 domain occupies 26-178 (NGYVCDFKFN…GLVKIILNNQ (153 aa)). 3 disulfide bridges follow: Cys-30–Cys-55, Cys-70–Cys-145, and Cys-88–Cys-143. The N-linked (GlcNAc...) asparagine glycan is linked to Asn-45. A glycan (N-linked (GlcNAc...) asparagine) is linked at Asn-239. Residues 278 to 413 (NIDGCDFTVP…MELKISSSKN (136 aa)) enclose the 6-Cys 2 domain. 3 cysteine pairs are disulfide-bonded: Cys-282–Cys-309, Cys-326–Cys-395, and Cys-335–Cys-393. Ser-409 carries GPI-anchor amidated serine lipidation. Positions 410 to 431 (SSKNIFISFILLSIIVSIFYLF) are cleaved as a propeptide — removed in mature form.

It is found in the cell surface. It localises to the cell membrane. In terms of biological role, required for female fertility. The polypeptide is Female gametocyte surface protein P47 (PB47) (Plasmodium berghei (strain Anka)).